The following is a 226-amino-acid chain: Isoprenyl transferase (226 aa).

D12 is an active-site residue. Residue D12 coordinates Mg(2+). Substrate-binding positions include 13–16 (GNAR), W17, K25, H29, and 57–59 (SSE). The active-site Proton acceptor is the N60. Substrate-binding positions include W61, R63, R174, and 180–182 (RIS). E193 is a binding site for Mg(2+).

Belongs to the UPP synthase family. As to quaternary structure, homodimer. Mg(2+) is required as a cofactor.

Its function is as follows. Catalyzes the condensation of isopentenyl diphosphate (IPP) with allylic pyrophosphates generating different type of terpenoids. The chain is Isoprenyl transferase from Rickettsia sibirica (strain ATCC VR-151 / 246).